Consider the following 303-residue polypeptide: Trans-enoyl reductase tazE (303 aa).

Residues 1-26 (MTAEHDAAILPKPGGPLAVGKRATPE) are disordered. 44–49 (CDYYQR) serves as a coordination point for NADP(+). 136–143 (LAVLTALT) is a binding site for substrate. Residues 170–173 (SSSV), 193–196 (SPKH), Tyr-211, and 246–247 (LD) each bind NADP(+). 265–269 (VLPEC) is a substrate binding site.

The protein belongs to the zinc-containing alcohol dehydrogenase family.

Its pathway is secondary metabolite biosynthesis. Trans-enoyl reductase; part of the gene cluster that mediates the biosynthesis of azaterrilone A and other azaphilones, a class of fungal metabolites characterized by a highly oxygenated pyrano-quinone bicyclic core and exhibiting a broad range of bioactivities. The first step of the pathway begins with the non-reducing polyketide synthase tazA that assembles one acetyl-CoA starter unit, five malonyl-CoA units, and catalyzes a series of Claisen condensations, methylation, PT-mediated cyclization, and finally releases the first hexaketide precursor through the R-domain. The tazA product then undergoes reduction on its terminal ketone and the following pyran-ring formation by yet undetermined enzyme(s). Dehydration and enoyl reduction, possibly involving the trans-enoyl reductase tazE leads to the next intermediate. TazD is predicted as an acetyltransferase and might catalyze the acetylation steps leading to the synthesis of azaterrilone A. Azaterrilone A is not the final product of the taz pathway and both the highly reducing polyketide synthase tazB and the dual enzyme tazHJ catalyze late steps of the pathway, leading to the production of the 2 final stereoisomers that contain additional polyketide modification whose structures have still to be determined. In Aspergillus terreus (strain NIH 2624 / FGSC A1156), this protein is Trans-enoyl reductase tazE.